Reading from the N-terminus, the 413-residue chain is Multifunctional CCA protein (413 aa).

Residues Gly-8 and Arg-11 each contribute to the ATP site. CTP is bound by residues Gly-8 and Arg-11. The Mg(2+) site is built by Asp-21 and Asp-23. Arg-91, Arg-137, and Arg-140 together coordinate ATP. Residues Arg-91, Arg-137, and Arg-140 each coordinate CTP. The region spanning 228-329 is the HD domain; sequence TGLHTLMTVT…VKLFDSIDAW (102 aa).

The protein belongs to the tRNA nucleotidyltransferase/poly(A) polymerase family. Bacterial CCA-adding enzyme type 1 subfamily. As to quaternary structure, monomer. Can also form homodimers and oligomers. The cofactor is Mg(2+). Ni(2+) serves as cofactor.

The catalysed reaction is a tRNA precursor + 2 CTP + ATP = a tRNA with a 3' CCA end + 3 diphosphate. It carries out the reaction a tRNA with a 3' CCA end + 2 CTP + ATP = a tRNA with a 3' CCACCA end + 3 diphosphate. Functionally, catalyzes the addition and repair of the essential 3'-terminal CCA sequence in tRNAs without using a nucleic acid template. Adds these three nucleotides in the order of C, C, and A to the tRNA nucleotide-73, using CTP and ATP as substrates and producing inorganic pyrophosphate. tRNA 3'-terminal CCA addition is required both for tRNA processing and repair. Also involved in tRNA surveillance by mediating tandem CCA addition to generate a CCACCA at the 3' terminus of unstable tRNAs. While stable tRNAs receive only 3'-terminal CCA, unstable tRNAs are marked with CCACCA and rapidly degraded. The protein is Multifunctional CCA protein of Klebsiella pneumoniae (strain 342).